We begin with the raw amino-acid sequence, 419 residues long: UDP-N-acetylglucosamine 1-carboxyvinyltransferase (419 aa).

22-23 (KN) is a phosphoenolpyruvate binding site. UDP-N-acetyl-alpha-D-glucosamine is bound at residue R95. The active-site Proton donor is the C119. C119 is subject to 2-(S-cysteinyl)pyruvic acid O-phosphothioketal. UDP-N-acetyl-alpha-D-glucosamine-binding positions include 164–167 (KVSV), D308, and I330.

The protein belongs to the EPSP synthase family. MurA subfamily.

The protein resides in the cytoplasm. The enzyme catalyses phosphoenolpyruvate + UDP-N-acetyl-alpha-D-glucosamine = UDP-N-acetyl-3-O-(1-carboxyvinyl)-alpha-D-glucosamine + phosphate. Its pathway is cell wall biogenesis; peptidoglycan biosynthesis. Functionally, cell wall formation. Adds enolpyruvyl to UDP-N-acetylglucosamine. The polypeptide is UDP-N-acetylglucosamine 1-carboxyvinyltransferase (Rickettsia massiliae (strain Mtu5)).